We begin with the raw amino-acid sequence, 122 residues long: Large ribosomal subunit protein uL14 (122 aa).

The protein belongs to the universal ribosomal protein uL14 family. As to quaternary structure, part of the 50S ribosomal subunit. Forms a cluster with proteins L3 and L19. In the 70S ribosome, L14 and L19 interact and together make contacts with the 16S rRNA in bridges B5 and B8.

In terms of biological role, binds to 23S rRNA. Forms part of two intersubunit bridges in the 70S ribosome. In Oenococcus oeni (strain ATCC BAA-331 / PSU-1), this protein is Large ribosomal subunit protein uL14.